The chain runs to 339 residues: Centromere protein N (339 aa).

Phosphoserine is present on residues Ser226 and Ser235.

This sequence belongs to the CENP-N/CHL4 family. Component of the CENPA-NAC complex, at least composed of CENPA, CENPC, CENPH, CENPM, CENPN, CENPT and CENPU. The CENPA-NAC complex interacts with the CENPA-CAD complex, composed of CENPI, CENPK, CENPL, CENPO, CENPP, CENPQ, CENPR and CENPS. Interacts directly with CENPA. Identified in a centromere complex containing histones H2A, H2B and H4, and at least CENPA, CENPB, CENPC, CENPT, CENPN, HJURP, SUPT16H, SSRP1 and RSF1.

It is found in the nucleus. Its subcellular location is the chromosome. The protein resides in the centromere. It localises to the kinetochore. In terms of biological role, component of the CENPA-NAC (nucleosome-associated) complex, a complex that plays a central role in assembly of kinetochore proteins, mitotic progression and chromosome segregation. The CENPA-NAC complex recruits the CENPA-CAD (nucleosome distal) complex and may be involved in incorporation of newly synthesized CENPA into centromeres. CENPN is the first protein to bind specifically to CENPA nucleosomes and the direct binding of CENPA nucleosomes by CENPN is required for centromere assembly. Required for chromosome congression and efficiently align the chromosomes on a metaphase plate. This Bos taurus (Bovine) protein is Centromere protein N (CENPN).